The following is a 1067-amino-acid chain: Kinesin-like protein KIF11 (1067 aa).

The Kinesin motor domain occupies 18–359 (NIQVVVRCRP…LEYANRAKNI (342 aa)). 105 to 112 (GQTGTGKT) is a binding site for ATP. Positions 365–480 (VNQKLTKRAL…SKEQLAQEAF (116 aa)) form a coiled coil. Phosphothreonine; by CDK1 is present on threonine 937. Position 1046 is a phosphoserine; by NEK6 (serine 1046). The tract at residues 1048-1067 (IMDEAEQSLPKSKLPLRMQN) is disordered.

The protein belongs to the TRAFAC class myosin-kinesin ATPase superfamily. Kinesin family. BimC subfamily. Heterotetramer of two heavy and two light chains. Interacts with aurka. Phosphorylation of Thr-937 during mitosis controls the association of this protein with the spindle apparatus. In terms of processing, a subset of this protein primarily localized at the spindle pole is phosphorylated by NEK6 during mitosis. Post-translationally, phosphorylated on a serine residue by aurka.

Its subcellular location is the cytoplasm. The protein localises to the cytoskeleton. The protein resides in the spindle pole. Plus end-directed motor protein required for establishing a bipolar spindle. Associates with both interphase and mitotic spindle microtubules. May be involved in nuclear divisions taking place during the development of unfertilized eggs. Required in non-mitotic cells for transport of secretory proteins from the Golgi complex to the cell surface. The sequence is that of Kinesin-like protein KIF11 from Xenopus tropicalis (Western clawed frog).